The following is a 271-amino-acid chain: Elongation factor Ts (271 aa).

The segment at 76–79 (TDFV) is involved in Mg(2+) ion dislocation from EF-Tu.

It belongs to the EF-Ts family.

Its subcellular location is the cytoplasm. Associates with the EF-Tu.GDP complex and induces the exchange of GDP to GTP. It remains bound to the aminoacyl-tRNA.EF-Tu.GTP complex up to the GTP hydrolysis stage on the ribosome. This is Elongation factor Ts from Saccharopolyspora erythraea (strain ATCC 11635 / DSM 40517 / JCM 4748 / NBRC 13426 / NCIMB 8594 / NRRL 2338).